We begin with the raw amino-acid sequence, 339 residues long: Dihydroorotate dehydrogenase (quinone) (339 aa).

Residues 62 to 66 (AGMDK) and T86 contribute to the FMN site. Substrate is bound at residue K66. Position 111–115 (111–115 (NRMGF)) interacts with substrate. Residues N139 and N172 each contribute to the FMN site. N172 lines the substrate pocket. S175 serves as the catalytic Nucleophile. Residue N177 participates in substrate binding. FMN-binding residues include K217 and T245. 246–247 (NT) is a substrate binding site. FMN-binding positions include G268, G297, and 318–319 (YS).

It belongs to the dihydroorotate dehydrogenase family. Type 2 subfamily. In terms of assembly, monomer. It depends on FMN as a cofactor.

Its subcellular location is the cell membrane. It catalyses the reaction (S)-dihydroorotate + a quinone = orotate + a quinol. The protein operates within pyrimidine metabolism; UMP biosynthesis via de novo pathway; orotate from (S)-dihydroorotate (quinone route): step 1/1. In terms of biological role, catalyzes the conversion of dihydroorotate to orotate with quinone as electron acceptor. The protein is Dihydroorotate dehydrogenase (quinone) of Shewanella oneidensis (strain ATCC 700550 / JCM 31522 / CIP 106686 / LMG 19005 / NCIMB 14063 / MR-1).